The chain runs to 286 residues: 4-hydroxybenzoate octaprenyltransferase (286 aa).

7 helical membrane-spanning segments follow: residues 22–42 (IGTLLLLWPTLWALYLAEKAM), 45–65 (LSVLAIFIFGVFLMRSAGCVI), 98–118 (LFIVLVFCSFLLVLCLNLYTI), 143–163 (FFLGAAFGWSIPMAYGATIEA), 213–233 (IIALLQIITLIFLFSVGYLSQ), 238–255 (YFIVLAIAGLFFVYQCRL), and 266–286 (NAFLNNNYFGLTVFIAVLFGI).

The protein belongs to the UbiA prenyltransferase family. The cofactor is Mg(2+).

It is found in the cell inner membrane. It carries out the reaction all-trans-octaprenyl diphosphate + 4-hydroxybenzoate = 4-hydroxy-3-(all-trans-octaprenyl)benzoate + diphosphate. It functions in the pathway cofactor biosynthesis; ubiquinone biosynthesis. Functionally, catalyzes the prenylation of para-hydroxybenzoate (PHB) with an all-trans polyprenyl group. Mediates the second step in the final reaction sequence of ubiquinone-8 (UQ-8) biosynthesis, which is the condensation of the polyisoprenoid side chain with PHB, generating the first membrane-bound Q intermediate 3-octaprenyl-4-hydroxybenzoate. This Histophilus somni (strain 2336) (Haemophilus somnus) protein is 4-hydroxybenzoate octaprenyltransferase.